Consider the following 290-residue polypeptide: 4-hydroxy-tetrahydrodipicolinate synthase (290 aa).

Residue Thr44 participates in pyruvate binding. Tyr132 acts as the Proton donor/acceptor in catalysis. The active-site Schiff-base intermediate with substrate is the Lys160. Residue Ile202 participates in pyruvate binding.

Belongs to the DapA family. In terms of assembly, homotetramer; dimer of dimers.

Its subcellular location is the cytoplasm. It catalyses the reaction L-aspartate 4-semialdehyde + pyruvate = (2S,4S)-4-hydroxy-2,3,4,5-tetrahydrodipicolinate + H2O + H(+). It participates in amino-acid biosynthesis; L-lysine biosynthesis via DAP pathway; (S)-tetrahydrodipicolinate from L-aspartate: step 3/4. Its function is as follows. Catalyzes the condensation of (S)-aspartate-beta-semialdehyde [(S)-ASA] and pyruvate to 4-hydroxy-tetrahydrodipicolinate (HTPA). The polypeptide is 4-hydroxy-tetrahydrodipicolinate synthase (Trichlorobacter lovleyi (strain ATCC BAA-1151 / DSM 17278 / SZ) (Geobacter lovleyi)).